The primary structure comprises 360 residues: Endolytic peptidoglycan transglycosylase RlpA (360 aa).

The signal sequence occupies residues 1-17 (MRKEWLWVGIASVLLSA). A lipid anchor (N-palmitoyl cysteine) is attached at Cys18. A lipid anchor (S-diacylglycerol cysteine) is attached at Cys18. The region spanning 283 to 359 (SAISGGYVVQ…AQQQSFIVAA (77 aa)) is the SPOR domain.

Belongs to the RlpA family.

It localises to the cell membrane. In terms of biological role, lytic transglycosylase with a strong preference for naked glycan strands that lack stem peptides. The chain is Endolytic peptidoglycan transglycosylase RlpA from Yersinia pestis.